We begin with the raw amino-acid sequence, 226 residues long: Thiamine-phosphate synthase (226 aa).

4-amino-2-methyl-5-(diphosphooxymethyl)pyrimidine is bound by residues Q46 to K50 and N87. 2 residues coordinate Mg(2+): D88 and D107. S126 contacts 4-amino-2-methyl-5-(diphosphooxymethyl)pyrimidine. T152–T154 serves as a coordination point for 2-[(2R,5Z)-2-carboxy-4-methylthiazol-5(2H)-ylidene]ethyl phosphate. K155 is a 4-amino-2-methyl-5-(diphosphooxymethyl)pyrimidine binding site. A 2-[(2R,5Z)-2-carboxy-4-methylthiazol-5(2H)-ylidene]ethyl phosphate-binding site is contributed by G183.

The protein belongs to the thiamine-phosphate synthase family. Requires Mg(2+) as cofactor.

The catalysed reaction is 2-[(2R,5Z)-2-carboxy-4-methylthiazol-5(2H)-ylidene]ethyl phosphate + 4-amino-2-methyl-5-(diphosphooxymethyl)pyrimidine + 2 H(+) = thiamine phosphate + CO2 + diphosphate. The enzyme catalyses 2-(2-carboxy-4-methylthiazol-5-yl)ethyl phosphate + 4-amino-2-methyl-5-(diphosphooxymethyl)pyrimidine + 2 H(+) = thiamine phosphate + CO2 + diphosphate. It catalyses the reaction 4-methyl-5-(2-phosphooxyethyl)-thiazole + 4-amino-2-methyl-5-(diphosphooxymethyl)pyrimidine + H(+) = thiamine phosphate + diphosphate. It functions in the pathway cofactor biosynthesis; thiamine diphosphate biosynthesis; thiamine phosphate from 4-amino-2-methyl-5-diphosphomethylpyrimidine and 4-methyl-5-(2-phosphoethyl)-thiazole: step 1/1. In terms of biological role, condenses 4-methyl-5-(beta-hydroxyethyl)thiazole monophosphate (THZ-P) and 2-methyl-4-amino-5-hydroxymethyl pyrimidine pyrophosphate (HMP-PP) to form thiamine monophosphate (TMP). This Mycobacterium sp. (strain JLS) protein is Thiamine-phosphate synthase.